The sequence spans 468 residues: 6-phospho-beta-galactosidase (468 aa).

Residues Gln19, His116, Asn159, Glu160, and Asn297 each contribute to the D-galactose 6-phosphate site. Catalysis depends on Glu160, which acts as the Proton donor. Residue Glu375 is the Nucleophile of the active site. 4 residues coordinate D-galactose 6-phosphate: Ser428, Trp429, Lys435, and Tyr437.

Belongs to the glycosyl hydrolase 1 family.

It catalyses the reaction a 6-phospho-beta-D-galactoside + H2O = D-galactose 6-phosphate + an alcohol. Its pathway is carbohydrate metabolism; lactose degradation; D-galactose 6-phosphate and beta-D-glucose from lactose 6-phosphate: step 1/1. This chain is 6-phospho-beta-galactosidase, found in Streptococcus pyogenes serotype M5 (strain Manfredo).